The sequence spans 423 residues: N-acylneuraminate cytidylyltransferase B (423 aa).

Residues Arg30, Asn40, Arg88, Ser97, Ser99, and Gln120 each coordinate substrate. The active site involves Arg178.

This sequence belongs to the CMP-NeuNAc synthase family. In terms of assembly, homotetramer.

It localises to the cytoplasm. It carries out the reaction an N-acylneuraminate + CTP = a CMP-N-acyl-beta-neuraminate + diphosphate. It functions in the pathway amino-sugar metabolism; N-acetylneuraminate metabolism. In terms of biological role, catalyzes the activation of 2-keto-3-deoxy-D-glycero-D-galacto-nononic acid (KDN) to cytidine 5'-monophosphate 2-keto-3-deoxy-D-glycero-D-galacto-nononic acid (CMP-KDN), a substrate required for the addition of sialic acid. Also has weak activity towards N-acetylneuraminic acid (NeuNAc) and N-glycolylneuraminic acid (Neu5Gc). This is N-acylneuraminate cytidylyltransferase B from Danio rerio (Zebrafish).